We begin with the raw amino-acid sequence, 829 residues long: Periplasmic nitrate reductase (829 aa).

A signal peptide (tat-type signal) is located at residues 1-30; it reads MKMTRRAFVKANAAASAAAVAGITLPASAA. Residues 41 to 97 enclose the 4Fe-4S Mo/W bis-MGD-type domain; the sequence is ITWDKAPCRFCGTGCSVLVGTQNGKVVATQGDPEAPVNKGLNCIKGYFLSKIMYGQD. [4Fe-4S] cluster contacts are provided by C48, C51, C55, and C83. Mo-bis(molybdopterin guanine dinucleotide) contacts are provided by residues K85, Q152, N177, C181, 214–221, 245–249, 264–266, M374, Q378, N484, 510–511, K533, D560, and 718–727; these read WGSNMAEM, STYYH, QSD, SD, and TGRVLEHWHT. Position 794 (F794) interacts with substrate. Residues N802 and K819 each contribute to the Mo-bis(molybdopterin guanine dinucleotide) site.

The protein belongs to the prokaryotic molybdopterin-containing oxidoreductase family. NasA/NapA/NarB subfamily. As to quaternary structure, component of the periplasmic nitrate reductase NapAB complex composed of NapA and NapB. [4Fe-4S] cluster is required as a cofactor. It depends on Mo-bis(molybdopterin guanine dinucleotide) as a cofactor. Predicted to be exported by the Tat system. The position of the signal peptide cleavage has not been experimentally proven.

The protein localises to the periplasm. The catalysed reaction is 2 Fe(II)-[cytochrome] + nitrate + 2 H(+) = 2 Fe(III)-[cytochrome] + nitrite + H2O. Catalytic subunit of the periplasmic nitrate reductase complex NapAB. Receives electrons from NapB and catalyzes the reduction of nitrate to nitrite. The polypeptide is Periplasmic nitrate reductase (Vibrio vulnificus (strain CMCP6)).